The sequence spans 238 residues: CD63 antigen (238 aa).

The Cytoplasmic segment spans residues 1–11 (MAVEGGMKCVK). A helical membrane pass occupies residues 12-32 (FLLYVLLLAFCACAVGLIAVG). Topologically, residues 33–51 (VGAQLVLSQTITHGATPGS) are extracellular. The chain crosses the membrane as a helical span at residues 52–72 (LLPVVIIAVGAFLFLVAFVGC). The Cytoplasmic segment spans residues 73–81 (CGTCKENYC). A helical transmembrane segment spans residues 82–102 (LMITFAIFLSLIMLVEVAAAI). The Extracellular portion of the chain corresponds to 103–203 (AGYVFRDKVM…KIGLWLRKNV (101 aa)). Residues Asn125, Asn130, Asn150, and Asn172 are each glycosylated (N-linked (GlcNAc...) asparagine). Residues 204-224 (LVVAAAALGIAFVEVLGIVFA) traverse the membrane as a helical segment. At 225 to 238 (CCLVKSIRSGYEVM) the chain is on the cytoplasmic side. A Lysosomal targeting motif motif is present at residues 234–238 (GYEVM).

This sequence belongs to the tetraspanin (TM4SF) family. Interacts with TIMP1 and ITGB1 and recruits TIMP1 to ITGB1. Interacts with CD9. Identified in a complex with CD9 and ITGB3. Interacts with PMEL. Interacts with KDR/VEGFR2; identified in a complex with ITGB1 and KDR/VEGFR2 and is required to recruit KDR to ITGB1 complexes. Interacts with SYT7. Palmitoylated at a low, basal level in unstimulated platelets. The level of palmitoylation increases when platelets are activated by thrombin (in vitro).

The protein resides in the cell membrane. It is found in the lysosome membrane. Its subcellular location is the late endosome membrane. The protein localises to the endosome. It localises to the multivesicular body. The protein resides in the melanosome. It is found in the secreted. Its subcellular location is the extracellular exosome. The protein localises to the cell surface. Its function is as follows. Functions as a cell surface receptor for TIMP1 and plays a role in the activation of cellular signaling cascades. Plays a role in the activation of ITGB1 and integrin signaling, leading to the activation of AKT, FAK/PTK2 and MAP kinases. Promotes cell survival, reorganization of the actin cytoskeleton, cell adhesion, spreading and migration, via its role in the activation of AKT and FAK/PTK2. Plays a role in VEGFA signaling via its role in regulating the internalization of KDR/VEGFR2. Plays a role in intracellular vesicular transport processes, and is required for normal trafficking of the PMEL luminal domain that is essential for the development and maturation of melanocytes. Plays a role in the adhesion of leukocytes onto endothelial cells via its role in the regulation of SELP trafficking. May play a role in mast cell degranulation in response to Ms4a2/FceRI stimulation, but not in mast cell degranulation in response to other stimuli. This is CD63 antigen (CD63) from Oryctolagus cuniculus (Rabbit).